Consider the following 266-residue polypeptide: Energy-coupling factor transporter transmembrane protein EcfT (266 aa).

A run of 7 helical transmembrane segments spans residues 26-46 (VIAT…RSVT), 47-67 (LAGL…HYIL), 69-89 (GIKP…LSTP), 116-136 (LIWL…IALT), 151-171 (LPVH…PTLI), 192-212 (SLVA…LSAF), and 246-266 (YAVT…KKAL).

Belongs to the energy-coupling factor EcfT family. In terms of assembly, forms a stable energy-coupling factor (ECF) transporter complex composed of 2 membrane-embedded substrate-binding proteins (S component), 2 ATP-binding proteins (A component) and 2 transmembrane proteins (T component). May be able to interact with more than 1 S component at a time.

The protein resides in the cell membrane. Its function is as follows. Transmembrane (T) component of an energy-coupling factor (ECF) ABC-transporter complex. Unlike classic ABC transporters this ECF transporter provides the energy necessary to transport a number of different substrates. The protein is Energy-coupling factor transporter transmembrane protein EcfT of Heliobacterium modesticaldum (strain ATCC 51547 / Ice1).